A 333-amino-acid polypeptide reads, in one-letter code: Ketol-acid reductoisomerase (NADP(+)) (333 aa).

The region spanning 2–182 is the KARI N-terminal Rossmann domain; that stretch reads AELFYDDDAD…GGTRAGVIKT (181 aa). Residues 25 to 28, Ser51, Ser53, and 83 to 86 each bind NADP(+); these read YGSQ and DPIQ. His108 is a catalytic residue. Gly134 contacts NADP(+). The 146-residue stretch at 183–328 folds into the KARI C-terminal knotted domain; sequence TFTEETETDL…RELRKLMSWV (146 aa). Residues Asp191, Glu195, Glu227, and Glu231 each contribute to the Mg(2+) site. Ser252 is a binding site for substrate.

This sequence belongs to the ketol-acid reductoisomerase family. The cofactor is Mg(2+).

It carries out the reaction (2R)-2,3-dihydroxy-3-methylbutanoate + NADP(+) = (2S)-2-acetolactate + NADPH + H(+). The enzyme catalyses (2R,3R)-2,3-dihydroxy-3-methylpentanoate + NADP(+) = (S)-2-ethyl-2-hydroxy-3-oxobutanoate + NADPH + H(+). It participates in amino-acid biosynthesis; L-isoleucine biosynthesis; L-isoleucine from 2-oxobutanoate: step 2/4. It functions in the pathway amino-acid biosynthesis; L-valine biosynthesis; L-valine from pyruvate: step 2/4. Involved in the biosynthesis of branched-chain amino acids (BCAA). Catalyzes an alkyl-migration followed by a ketol-acid reduction of (S)-2-acetolactate (S2AL) to yield (R)-2,3-dihydroxy-isovalerate. In the isomerase reaction, S2AL is rearranged via a Mg-dependent methyl migration to produce 3-hydroxy-3-methyl-2-ketobutyrate (HMKB). In the reductase reaction, this 2-ketoacid undergoes a metal-dependent reduction by NADPH to yield (R)-2,3-dihydroxy-isovalerate. This chain is Ketol-acid reductoisomerase (NADP(+)), found in Streptomyces griseus subsp. griseus (strain JCM 4626 / CBS 651.72 / NBRC 13350 / KCC S-0626 / ISP 5235).